The primary structure comprises 286 residues: 33 kDa chaperonin (286 aa).

Disulfide bonds link cysteine 225–cysteine 227 and cysteine 258–cysteine 261.

It belongs to the HSP33 family. Under oxidizing conditions two disulfide bonds are formed involving the reactive cysteines. Under reducing conditions zinc is bound to the reactive cysteines and the protein is inactive.

Its subcellular location is the cytoplasm. In terms of biological role, redox regulated molecular chaperone. Protects both thermally unfolding and oxidatively damaged proteins from irreversible aggregation. Plays an important role in the bacterial defense system toward oxidative stress. The polypeptide is 33 kDa chaperonin (Shewanella sp. (strain ANA-3)).